A 426-amino-acid polypeptide reads, in one-letter code: Mothers against decapentaplegic homolog 7 (426 aa).

A disordered region spans residues 14 to 42 (WRSRAPGGEDEEEGVGGGGGGGELRGEGA). N6-acetyllysine; alternate occurs at positions 64 and 70. Glycyl lysine isopeptide (Lys-Gly) (interchain with G-Cter in ubiquitin); alternate cross-links involve residues Lys-64 and Lys-70. In terms of domain architecture, MH1 spans 64-207 (KAVRGAKGHH…LSRLCELESP (144 aa)). Residues 67 to 76 (RGAKGHHHPH) show a composition bias toward basic residues. A disordered region spans residues 67–87 (RGAKGHHHPHPPTSGAGAAGG). Cys-125, Cys-180, Cys-192, and His-197 together coordinate Zn(2+). The short motif at 208–211 (PPPY) is the PY-motif element. Residues 208-217 (PPPYSRYPMD) form an important for interaction with SMURF2 region. A Phosphoserine modification is found at Ser-249. The 166-residue stretch at 261 to 426 (WCVVAYWEEK…CWLEVIFNSR (166 aa)) folds into the MH2 domain.

The protein belongs to the dwarfin/SMAD family. Interacts with COPS5. Interacts with STAMBP. Interacts with PPP1R15A. Interacts with NEDD4L. Interacts with RNF111, AXIN1 and AXIN2. Interacts with ACVR1B, SMURF1, SMURF2 and TGFBR1; SMAD7 recruits SMURF1 and SMURF2 to the TGF-beta receptor and regulates its degradation. Interacts with WWP1. Interacts with PDPK1 (via PH domain). Ubiquitinated by WWP1. Interacts with TSC22D1/TSC-22; the interaction requires TGF-beta and the interaction is inhibited by TGFBR1. Phosphorylation on Ser-249 does not affect its stability, nuclear localization or inhibitory function in TGFB signaling; however it affects its ability to regulate transcription. Phosphorylated by PDPK1. In terms of processing, ubiquitinated by WWP1. Polyubiquitinated by RNF111, which is enhanced by AXIN1 and promotes proteasomal degradation. In response to TGF-beta, ubiquitinated by SMURF1; which promotes its degradation. Ubiquitinated by ARK2C, promoting proteasomal degradation, leading to enhance the BMP-Smad signaling. Post-translationally, acetylation prevents ubiquitination and degradation mediated by SMURF1. As to expression, ubiquitous in various organs, with higher levels in brain and kidney.

Its subcellular location is the nucleus. The protein resides in the cytoplasm. Functionally, antagonist of signaling by TGF-beta (transforming growth factor) type 1 receptor superfamily members; has been shown to inhibit TGF-beta (Transforming growth factor) and activin signaling by associating with their receptors thus preventing SMAD2 access. Functions as an adapter to recruit SMURF2 to the TGF-beta receptor complex. Also acts by recruiting the PPP1R15A-PP1 complex to TGFBR1, which promotes its dephosphorylation. Positively regulates PDPK1 kinase activity by stimulating its dissociation from the 14-3-3 protein YWHAQ which acts as a negative regulator. This chain is Mothers against decapentaplegic homolog 7 (Smad7), found in Mus musculus (Mouse).